The sequence spans 523 residues: GMP synthase [glutamine-hydrolyzing] (523 aa).

One can recognise a Glutamine amidotransferase type-1 domain in the interval 9–198 (PVLVVDFGAQ…LTEIAGLEQN (190 aa)). Catalysis depends on cysteine 86, which acts as the Nucleophile. Active-site residues include histidine 172 and glutamate 174. The region spanning 199–397 (WTAANIAEEL…LGLPEEIVGR (199 aa)) is the GMPS ATP-PPase domain. 227–233 (SGGVDSA) provides a ligand contact to ATP.

Homodimer.

The enzyme catalyses XMP + L-glutamine + ATP + H2O = GMP + L-glutamate + AMP + diphosphate + 2 H(+). The protein operates within purine metabolism; GMP biosynthesis; GMP from XMP (L-Gln route): step 1/1. Its function is as follows. Catalyzes the synthesis of GMP from XMP. The protein is GMP synthase [glutamine-hydrolyzing] of Corynebacterium glutamicum (strain R).